The primary structure comprises 429 residues: Arginine biosynthesis bifunctional protein ArgJ (429 aa).

Substrate is bound by residues threonine 181, lysine 207, threonine 218, glutamate 302, asparagine 424, and serine 429. Threonine 218 serves as the catalytic Nucleophile.

Belongs to the ArgJ family. As to quaternary structure, heterotetramer of two alpha and two beta chains.

The protein localises to the cytoplasm. The enzyme catalyses N(2)-acetyl-L-ornithine + L-glutamate = N-acetyl-L-glutamate + L-ornithine. It catalyses the reaction L-glutamate + acetyl-CoA = N-acetyl-L-glutamate + CoA + H(+). The protein operates within amino-acid biosynthesis; L-arginine biosynthesis; L-ornithine and N-acetyl-L-glutamate from L-glutamate and N(2)-acetyl-L-ornithine (cyclic): step 1/1. It participates in amino-acid biosynthesis; L-arginine biosynthesis; N(2)-acetyl-L-ornithine from L-glutamate: step 1/4. Catalyzes two activities which are involved in the cyclic version of arginine biosynthesis: the synthesis of N-acetylglutamate from glutamate and acetyl-CoA as the acetyl donor, and of ornithine by transacetylation between N(2)-acetylornithine and glutamate. This is Arginine biosynthesis bifunctional protein ArgJ from Chlorobium chlorochromatii (strain CaD3).